The chain runs to 523 residues: Ribonuclease Y (523 aa).

The chain crosses the membrane as a helical span at residues 3–23 (VWYAIGSIIFGLLVGVSVYLI). The KH domain occupies 213–279 (LVNVINLPND…TKTIEKLVED (67 aa)). In terms of domain architecture, HD spans 339–432 (ALGHSIEVAN…VCAADTLSAA (94 aa)).

It belongs to the RNase Y family.

The protein resides in the cell membrane. In terms of biological role, endoribonuclease that initiates mRNA decay. The protein is Ribonuclease Y of Helicobacter hepaticus (strain ATCC 51449 / 3B1).